A 216-amino-acid polypeptide reads, in one-letter code: Ornithine decarboxylase antizyme 1 (216 aa).

Belongs to the ODC antizyme family. In terms of assembly, interacts with ODC1 and thereby sterically blocks ODC homodimerization.

Functionally, ornithine decarboxylase (ODC) antizyme protein that negatively regulates ODC activity and intracellular polyamine biosynthesis and uptake in response to increased intracellular polyamine levels. Binds to ODC monomers, inhibiting the assembly of the functional ODC homodimer, and targets the monomers for ubiquitin-independent proteolytic destruction by the 26S proteasome. The sequence is that of Ornithine decarboxylase antizyme 1 (oaz1) from Xenopus laevis (African clawed frog).